Consider the following 235-residue polypeptide: Small ribosomal subunit protein uS2c (235 aa).

It belongs to the universal ribosomal protein uS2 family.

It is found in the plastid. This Euglena longa (Euglenophycean alga) protein is Small ribosomal subunit protein uS2c (rps2).